Consider the following 348-residue polypeptide: Putative S-adenosyl-L-methionine-dependent methyltransferase MRA_3439 (348 aa).

S-adenosyl-L-methionine is bound by residues aspartate 171 and 200–201 (DL).

The protein belongs to the UPF0677 family.

Functionally, exhibits S-adenosyl-L-methionine-dependent methyltransferase activity. The protein is Putative S-adenosyl-L-methionine-dependent methyltransferase MRA_3439 of Mycobacterium tuberculosis (strain ATCC 25177 / H37Ra).